A 176-amino-acid chain; its full sequence is Inner membrane-spanning protein YciB (176 aa).

5 helical membrane passes run 23–43 (MIAA…FLYW), 50–70 (TMQW…IVLG), 74–94 (FIMW…LGSH), 119–139 (LTYM…FVFT), and 150–170 (MFGS…YLST).

It belongs to the YciB family.

It localises to the cell inner membrane. Its function is as follows. Plays a role in cell envelope biogenesis, maintenance of cell envelope integrity and membrane homeostasis. In Neisseria gonorrhoeae (strain ATCC 700825 / FA 1090), this protein is Inner membrane-spanning protein YciB.